A 582-amino-acid chain; its full sequence is Formate--tetrahydrofolate ligase (582 aa).

ATP is bound at residue 65-72 (TPLGEGKT).

This sequence belongs to the formate--tetrahydrofolate ligase family.

The enzyme catalyses (6S)-5,6,7,8-tetrahydrofolate + formate + ATP = (6R)-10-formyltetrahydrofolate + ADP + phosphate. Its pathway is one-carbon metabolism; tetrahydrofolate interconversion. The chain is Formate--tetrahydrofolate ligase from Vibrio vulnificus (strain CMCP6).